A 606-amino-acid chain; its full sequence is Transcription factor glial cells missing 2 (606 aa).

The segment covering 20-37 has biased composition (polar residues); sequence DHSQLTQFVQPQSQSTHS. 3 disordered regions span residues 20 to 65, 475 to 501, and 561 to 606; these read DHSQ…KGKR, EMQQ…HHYY, and TAPT…SVTH. Residues 44 to 61 are compositionally biased toward low complexity; the sequence is PGQQQAGGSMTMPSSSTG. Positions 65–224 form a DNA-binding region, GCM; sequence REWDINDAIV…KNSSVSKRAF (160 aa). A compositionally biased stretch (polar residues) spans 490–501; that stretch reads FGGNQTAGHHYY. Residues 569–580 show a composition bias toward pro residues; it reads PGHPPPPPPPPT. The segment covering 583-593 has biased composition (basic residues); that stretch reads YHHHHHHHLHH. The segment covering 594 to 606 has biased composition (low complexity); it reads PAAATGLAPSVTH.

As to expression, expressed in glial lineages within embryonic procephalic mesoderm. Expression is highest in hemocyte primordia and longitudinal and nerve root ganglia.

Its subcellular location is the nucleus. Transcription factor with a minor role promoting glial cell differentiation and a more significant role in hematocyte differentiation. Gcm2, together with gcm, is required for the proliferation of plasmatocyte precursors, the expression of Croquemort protein, and the ability of plasmatocytes to convert into macrophages. This chain is Transcription factor glial cells missing 2 (gcm2), found in Drosophila melanogaster (Fruit fly).